A 107-amino-acid polypeptide reads, in one-letter code: ATPase inhibitor, mitochondrial (107 aa).

The N-terminal 25 residues, 1–25 (MAGSALAVRARLGVWGMRVLQTRGF), are a transit peptide targeting the mitochondrion. A disordered region spans residues 25 to 58 (FGSDSSESMDSGAGSIREAGGAFGKREKAEEDRY). Residues 26–52 (GSDSSESMDSGAGSIREAGGAFGKREK) are N-terminal inhibitory region. S39 is subject to Phosphoserine. The segment covering 48–58 (GKREKAEEDRY) has biased composition (basic and acidic residues). Residues 60-107 (REKTREQLAALKKHHEDEIDHHSKEIERLQKQIERHKKKIKYLKNSEH) are a coiled coil. Residues 74-106 (HEDEIDHHSKEIERLQKQIERHKKKIKYLKNSE) form an antiparallel alpha-helical coiled coil region region. K103 carries the N6-succinyllysine modification.

Belongs to the ATPase inhibitor family. Homodimer; represents the active form and is present at a pH value below 6.5. Homotetramer; represents the inactive form and is present at a pH value above 7.0.

Its subcellular location is the mitochondrion. Endogenous F(1)F(o)-ATPase inhibitor limiting ATP depletion when the mitochondrial membrane potential falls below a threshold and the F(1)F(o)-ATP synthase starts hydrolyzing ATP to pump protons out of the mitochondrial matrix. Required to avoid the consumption of cellular ATP when the F(1)F(o)-ATP synthase enzyme acts as an ATP hydrolase. Indirectly acts as a regulator of heme synthesis in erythroid tissues: regulates heme synthesis by modulating the mitochondrial pH and redox potential, allowing FECH to efficiently catalyze the incorporation of iron into protoporphyrin IX to produce heme. The sequence is that of ATPase inhibitor, mitochondrial from Rattus norvegicus (Rat).